The sequence spans 674 residues: MVVVGKSEVRNVSMSRPKKKSLIAILSTCVLFFLVFIIGAKFQYVSVFSKFLDDRGDNESLQLLNDIEFTRLGLTPREPVIIKDVKTGKERKLHGRFLHITDIHPDPYYVEGSSIDAVCHTGKPSKKKDVAPKFGKAMSGCDSPVILMEETLRWIKENLRDKIDFVIWTGDNIRHDNDRKHPRTEAQIFDMNNIVADKMTELFSAGNEEDPRDFDVSVIPSLGNNDVFPHNMFALGPTLQTREYYRIWKNFVPQQQQRTFDRSASFLTEVIPGKLAVLSINTLYLFKANPLVDNCNSKKEPGYQLLLWFGYVLEELRSRGMKVWLSGHVPPIAKNFDQSCYDKFTLWTHEYRDIIIGGLYGHMNIDHFIPTDGKKARKSLLKAMEQSTRVQQGEDSNEEDEETELNRILDHAMAAKEVFLMGAKPSNKEAYMNTVRDTYYRKVWNKLERVDEKNVENEKKKKEKKDKKKKKPITRKELIERYSIVNIGGSVIPTFNPSFRIWEYNITDIVNDSNFAVSEYKPWDEFFESLNKIMEDSLLEDEMDSSNIEVGINREKMGEKKNKKKKKNDKTMPIEMPDKYELGPAYVPQLFTPTRFVQFYADLEKINQELHNSFVESKDIFRYEIEYTSDEKPYSMDSLTVGSYLDLAGRLYENKPAWEKYVEWSFASSGYKDD.

Residues 1–21 lie on the Cytoplasmic side of the membrane; the sequence is MVVVGKSEVRNVSMSRPKKKS. Propeptides (removed in mature form) lie at residues 1-83 and 385-674; these read MVVV…VIIK and EQST…YKDD. K6 participates in a covalent cross-link: Glycyl lysine isopeptide (Lys-Gly) (interchain with G-Cter in ubiquitin). The chain crosses the membrane as a helical; Signal-anchor for type II membrane protein span at residues 22–42; that stretch reads LIAILSTCVLFFLVFIIGAKF. The Vacuolar portion of the chain corresponds to 43–674; that stretch reads QYVSVFSKFL…SFASSGYKDD (632 aa). N58 carries N-linked (GlcNAc...) asparagine glycosylation. A disordered region spans residues 384 to 403; the sequence is MEQSTRVQQGEDSNEEDEET. Residues N505 and N511 are each glycosylated (N-linked (GlcNAc...) asparagine).

Belongs to the endopolyphosphatase PPN1 family. Homotetramer. Interacts with PPN2. Mn(2+) is required as a cofactor. Requires Mg(2+) as cofactor. It depends on Co(2+) as a cofactor. The cofactor is Zn(2+). Post-translationally, processing by proteases in the vacuole is required for activation. Ubiquitinated. Ubiquitination mediates sorting into internal vesicles in late endosomes. TUL1 and RSP5 are required for ubiquitination. Other cytoplasmic Lys residues than Lys-6 may also be ubiquitinated. In terms of processing, N-glycosylated. N-glycosylation is essential for the protease-mediated maturation.

The protein localises to the vacuole membrane. It localises to the cytoplasm. It catalyses the reaction [phosphate](n+1) + n H2O = (n+1) phosphate + n H(+). It carries out the reaction [phosphate](n) + H2O = [phosphate](n-1) + phosphate + H(+). The enzyme catalyses dATP + H2O = dADP + phosphate + H(+). Inhibited by heparin and EDTA. In terms of biological role, catalyzes the hydrolysis of inorganic polyphosphate (polyP) chains of many hundreds of phosphate residues into shorter lengths. Has both exopolyphosphatase and endopolyphosphatase activities at different ratios depending on divalent cations by cleaving phosphate from the chain end and by fragmenting long-chain polymers into shorter ones, respectively. The limited digestion products are 1 and 3 P(i) residues. Also releases phosphate from dATP. dATP phosphohydrolase activity is about 7-fold lower than the exopolyphosphatase activity. The sequence is that of Endopolyphosphatase from Saccharomyces cerevisiae (strain ATCC 204508 / S288c) (Baker's yeast).